Reading from the N-terminus, the 200-residue chain is ATP-dependent Clp protease proteolytic subunit (200 aa).

The Nucleophile role is filled by Ser98. Residue His123 is part of the active site.

Belongs to the peptidase S14 family. Fourteen ClpP subunits assemble into 2 heptameric rings which stack back to back to give a disk-like structure with a central cavity, resembling the structure of eukaryotic proteasomes.

It is found in the cytoplasm. It carries out the reaction Hydrolysis of proteins to small peptides in the presence of ATP and magnesium. alpha-casein is the usual test substrate. In the absence of ATP, only oligopeptides shorter than five residues are hydrolyzed (such as succinyl-Leu-Tyr-|-NHMec, and Leu-Tyr-Leu-|-Tyr-Trp, in which cleavage of the -Tyr-|-Leu- and -Tyr-|-Trp bonds also occurs).. Functionally, cleaves peptides in various proteins in a process that requires ATP hydrolysis. Has a chymotrypsin-like activity. Plays a major role in the degradation of misfolded proteins. The polypeptide is ATP-dependent Clp protease proteolytic subunit (Ehrlichia canis (strain Jake)).